The chain runs to 381 residues: Sterol 24-C-methyltransferase ERG6A (381 aa).

Belongs to the class I-like SAM-binding methyltransferase superfamily. Erg6/SMT family.

It carries out the reaction lanosterol + S-adenosyl-L-methionine = eburicol + S-adenosyl-L-homocysteine + H(+). It participates in steroid metabolism; ergosterol biosynthesis. Its function is as follows. Sterol 24-C-methyltransferase; part of the third module of ergosterol biosynthesis pathway that includes the late steps of the pathway. ERG6A and ERG6B methylate lanosterol at C-24 to produce eburicol. The third module or late pathway involves the ergosterol synthesis itself through consecutive reactions that mainly occur in the endoplasmic reticulum (ER) membrane. Firstly, the squalene synthase ERG9 catalyzes the condensation of 2 farnesyl pyrophosphate moieties to form squalene, which is the precursor of all steroids. Squalene synthase is crucial for balancing the incorporation of farnesyl diphosphate (FPP) into sterol and nonsterol isoprene synthesis. Secondly, squalene is converted into lanosterol by the consecutive action of the squalene epoxidase ERG1 and the lanosterol synthase ERG7. Then, the delta(24)-sterol C-methyltransferase ERG6 methylates lanosterol at C-24 to produce eburicol. Eburicol is the substrate of the sterol 14-alpha demethylase encoded by CYP51A, CYP51B and CYP51C, to yield 4,4,24-trimethyl ergosta-8,14,24(28)-trienol. CYP51B encodes the enzyme primarily responsible for sterol 14-alpha-demethylation, and plays an essential role in ascospore formation. CYP51A encodes an additional sterol 14-alpha-demethylase, induced on ergosterol depletion and responsible for the intrinsic variation in azole sensitivity. The third CYP51 isoform, CYP51C, does not encode a sterol 14-alpha-demethylase, but is required for full virulence on host wheat ears. The C-14 reductase ERG24 then reduces the C14=C15 double bond which leads to 4,4-dimethylfecosterol. A sequence of further demethylations at C-4, involving the C-4 demethylation complex containing the C-4 methylsterol oxidases ERG25, the sterol-4-alpha-carboxylate 3-dehydrogenase ERG26 and the 3-keto-steroid reductase ERG27, leads to the production of fecosterol via 4-methylfecosterol. ERG28 has a role as a scaffold to help anchor ERG25, ERG26 and ERG27 to the endoplasmic reticulum. The C-8 sterol isomerase ERG2 then catalyzes the reaction which results in unsaturation at C-7 in the B ring of sterols and thus converts fecosterol to episterol. The sterol-C5-desaturases ERG3A and ERG3BB then catalyze the introduction of a C-5 double bond in the B ring to produce 5-dehydroepisterol. The C-22 sterol desaturases ERG5A and ERG5B further convert 5-dehydroepisterol into ergosta-5,7,22,24(28)-tetraen-3beta-ol by forming the C-22(23) double bond in the sterol side chain. Finally, ergosta-5,7,22,24(28)-tetraen-3beta-ol is substrate of the C-24(28) sterol reductase ERG4 to produce ergosterol. This is Sterol 24-C-methyltransferase ERG6A (FG02783.1) from Gibberella zeae (strain ATCC MYA-4620 / CBS 123657 / FGSC 9075 / NRRL 31084 / PH-1) (Wheat head blight fungus).